Here is a 304-residue protein sequence, read N- to C-terminus: tRNA dimethylallyltransferase (304 aa).

8 to 15 (GPTASGKS) is a binding site for ATP. Position 10–15 (10–15 (TASGKS)) interacts with substrate. The tract at residues 33-36 (DSRQ) is interaction with substrate tRNA.

It belongs to the IPP transferase family. As to quaternary structure, monomer. It depends on Mg(2+) as a cofactor.

It catalyses the reaction adenosine(37) in tRNA + dimethylallyl diphosphate = N(6)-dimethylallyladenosine(37) in tRNA + diphosphate. Catalyzes the transfer of a dimethylallyl group onto the adenine at position 37 in tRNAs that read codons beginning with uridine, leading to the formation of N6-(dimethylallyl)adenosine (i(6)A). This chain is tRNA dimethylallyltransferase, found in Chlorobium luteolum (strain DSM 273 / BCRC 81028 / 2530) (Pelodictyon luteolum).